Reading from the N-terminus, the 510-residue chain is Outer spore wall protein 7 (510 aa).

Positions 1 to 23 are cleaved as a signal peptide; the sequence is MKAVFKVTTALLACVFIARYLVC. The tract at residues 167 to 195 is disordered; it reads FETDSETEDYEDDENENEDEDEDEDEDDV. The span at 169–195 shows a compositional bias: acidic residues; that stretch reads TDSETEDYEDDENENEDEDEDEDEDDV. Tyr-354 carries the post-translational modification Phosphotyrosine.

This sequence belongs to the OSW/SHE family.

Functionally, involved in spore wall assembly. The chain is Outer spore wall protein 7 from Saccharomyces cerevisiae (strain ATCC 204508 / S288c) (Baker's yeast).